Reading from the N-terminus, the 88-residue chain is Phosphocarrier protein HPr (88 aa).

Positions 1-88 (MEQASFVVID…EVLKKEGLAE (88 aa)) constitute an HPr domain. The active-site Pros-phosphohistidine intermediate is histidine 15. Serine 46 is modified (phosphoserine; by HPrK/P).

The protein belongs to the HPr family.

Its subcellular location is the cytoplasm. Phosphorylation on Ser-46 inhibits the phosphoryl transfer from enzyme I to HPr. In terms of biological role, general (non sugar-specific) component of the phosphoenolpyruvate-dependent sugar phosphotransferase system (sugar PTS). This major carbohydrate active-transport system catalyzes the phosphorylation of incoming sugar substrates concomitantly with their translocation across the cell membrane. The phosphoryl group from phosphoenolpyruvate (PEP) is transferred to the phosphoryl carrier protein HPr by enzyme I. Phospho-HPr then transfers it to the PTS EIIA domain. P-Ser-HPr interacts with the catabolite control protein A (CcpA), forming a complex that binds to DNA at the catabolite response elements cre, operator sites preceding a large number of catabolite-regulated genes. Thus, P-Ser-HPr is a corepressor in carbon catabolite repression (CCR), a mechanism that allows bacteria to coordinate and optimize the utilization of available carbon sources. P-Ser-HPr also plays a role in inducer exclusion, in which it probably interacts with several non-PTS permeases and inhibits their transport activity. The polypeptide is Phosphocarrier protein HPr (ptsH) (Listeria monocytogenes serovar 1/2a (strain ATCC BAA-679 / EGD-e)).